The chain runs to 456 residues: Probable flavin-containing monoamine oxidase A (456 aa).

C394 is subject to S-8alpha-FAD cysteine.

It belongs to the flavin monoamine oxidase family. Requires FAD as cofactor.

The enzyme catalyses a secondary aliphatic amine + O2 + H2O = a primary amine + an aldehyde + H2O2. The sequence is that of Probable flavin-containing monoamine oxidase A (maoA) from Dictyostelium discoideum (Social amoeba).